Reading from the N-terminus, the 133-residue chain is Large ribosomal subunit protein uL16c (133 aa).

Belongs to the universal ribosomal protein uL16 family. As to quaternary structure, part of the 50S ribosomal subunit.

It is found in the plastid. The polypeptide is Large ribosomal subunit protein uL16c (Euglena longa (Euglenophycean alga)).